A 361-amino-acid polypeptide reads, in one-letter code: tRNA 2-selenouridine synthase (361 aa).

Positions 11–134 (ALLERPLIDV…MRQCVNAEIE (124 aa)) constitute a Rhodanese domain. Cys94 serves as the catalytic S-selanylcysteine intermediate.

This sequence belongs to the SelU family. Monomer.

It catalyses the reaction 5-methylaminomethyl-2-thiouridine(34) in tRNA + selenophosphate + (2E)-geranyl diphosphate + H2O + H(+) = 5-methylaminomethyl-2-selenouridine(34) in tRNA + (2E)-thiogeraniol + phosphate + diphosphate. The enzyme catalyses 5-methylaminomethyl-2-thiouridine(34) in tRNA + (2E)-geranyl diphosphate = 5-methylaminomethyl-S-(2E)-geranyl-thiouridine(34) in tRNA + diphosphate. The catalysed reaction is 5-methylaminomethyl-S-(2E)-geranyl-thiouridine(34) in tRNA + selenophosphate + H(+) = 5-methylaminomethyl-2-(Se-phospho)selenouridine(34) in tRNA + (2E)-thiogeraniol. It carries out the reaction 5-methylaminomethyl-2-(Se-phospho)selenouridine(34) in tRNA + H2O = 5-methylaminomethyl-2-selenouridine(34) in tRNA + phosphate. In terms of biological role, involved in the post-transcriptional modification of the uridine at the wobble position (U34) of tRNA(Lys), tRNA(Glu) and tRNA(Gln). Catalyzes the conversion of 2-thiouridine (S2U-RNA) to 2-selenouridine (Se2U-RNA). Acts in a two-step process involving geranylation of 2-thiouridine (S2U) to S-geranyl-2-thiouridine (geS2U) and subsequent selenation of the latter derivative to 2-selenouridine (Se2U) in the tRNA chain. The chain is tRNA 2-selenouridine synthase from Chromohalobacter salexigens (strain ATCC BAA-138 / DSM 3043 / CIP 106854 / NCIMB 13768 / 1H11).